A 172-amino-acid chain; its full sequence is ATP synthase subunit b (172 aa).

The helical transmembrane segment at 12–32 (VGFNAGTMLFQLVAMLILLAL) threads the bilayer.

It belongs to the ATPase B chain family. F-type ATPases have 2 components, F(1) - the catalytic core - and F(0) - the membrane proton channel. F(1) has five subunits: alpha(3), beta(3), gamma(1), delta(1), epsilon(1). F(0) has three main subunits: a(1), b(2) and c(10-14). The alpha and beta chains form an alternating ring which encloses part of the gamma chain. F(1) is attached to F(0) by a central stalk formed by the gamma and epsilon chains, while a peripheral stalk is formed by the delta and b chains.

It is found in the cell membrane. In terms of biological role, f(1)F(0) ATP synthase produces ATP from ADP in the presence of a proton or sodium gradient. F-type ATPases consist of two structural domains, F(1) containing the extramembraneous catalytic core and F(0) containing the membrane proton channel, linked together by a central stalk and a peripheral stalk. During catalysis, ATP synthesis in the catalytic domain of F(1) is coupled via a rotary mechanism of the central stalk subunits to proton translocation. Functionally, component of the F(0) channel, it forms part of the peripheral stalk, linking F(1) to F(0). The chain is ATP synthase subunit b from Bacillus licheniformis (strain ATCC 14580 / DSM 13 / JCM 2505 / CCUG 7422 / NBRC 12200 / NCIMB 9375 / NCTC 10341 / NRRL NRS-1264 / Gibson 46).